A 315-amino-acid chain; its full sequence is Putative peptide transport system permease protein BMEII0209 (315 aa).

6 consecutive transmembrane segments (helical) span residues 13-33 (AIPV…LLPG), 102-122 (LALL…VVAA), 136-156 (LALL…VILF), 178-198 (WLRS…GYLA), 238-258 (VSVL…SVVI), and 287-307 (MLFL…LYTI). An ABC transmembrane type-1 domain is found at 96-305 (LPVTISLALL…AINVLVDILY (210 aa)).

Belongs to the binding-protein-dependent transport system permease family. As to quaternary structure, the complex is composed of two ATP-binding proteins (BMEII0205 and BMEII0206), two transmembrane proteins (BMEII0207/BMEII0208 and BMEII0209) and a solute-binding protein (BMEII0210).

The protein localises to the cell inner membrane. Probably part of an ABC transporter complex that could be involved in peptide import. Probably responsible for the translocation of the substrate across the membrane. This chain is Putative peptide transport system permease protein BMEII0209, found in Brucella melitensis biotype 1 (strain ATCC 23456 / CCUG 17765 / NCTC 10094 / 16M).